The following is a 583-amino-acid chain: MGEKLDKDSILYKKRHSIAHVMAEAVLELFPNTKIAIGPPIKDGFYYDFDFEKHISEDDLLLIEHKMREILKTGSPFIREVITREQALVLFKDEPYKIDLIQNFDVTDEITIYKSHKFTDLCRGPHVDNMNKLDPKAFKLTSIAGAYWRGNERNKMLSRIYGTLWNNEKDLKAYLKLQEEIKKRDHRKLGRELNLFSVHDEIGPGLIFFHPHGARIRALIENFWREEHFKNGYDILFTPHIGKSWLWETSGHLDFYKESMFEKIEMDRSDYYVKPMNCPFHIAIYNTDKHSYRDLPFRWAELGTVYRYEKIGAIHGTMRVRGFTQDDAHIICTYEQVNFEVREVLRFAIDMWNKFGFTNLKAYLSTKPEKAVGDDDDWQMAVKVLEKALIDFNIDFDIDEGGGAFYGPKIDLKIIDSLGRAWQMTTIQFDFNLPVRFKMTYTAEDGKEKRPFMIHRALLGSIERFFGILVEHYGGAFPVWLAPLQVVIIPVNSIVEEYALEVLSRFQNEGIRIKFDNYYNMRMNAKIRQYQSKKVPYMFIIGEREVVEGKISIRTRTNEQINGLELKEALEFVKLKISNKEIL.

The tract at residues 185 to 478 (DHRKLGRELN…LVEHYGGAFP (294 aa)) is catalytic. The Zn(2+) site is built by Cys278, His329, and His455.

It belongs to the class-II aminoacyl-tRNA synthetase family. In terms of assembly, homodimer. Requires Zn(2+) as cofactor.

Its subcellular location is the cytoplasm. The catalysed reaction is tRNA(Thr) + L-threonine + ATP = L-threonyl-tRNA(Thr) + AMP + diphosphate + H(+). Functionally, catalyzes the attachment of threonine to tRNA(Thr) in a two-step reaction: L-threonine is first activated by ATP to form Thr-AMP and then transferred to the acceptor end of tRNA(Thr). Also edits incorrectly charged L-seryl-tRNA(Thr). The protein is Threonine--tRNA ligase of Borrelia recurrentis (strain A1).